A 320-amino-acid chain; its full sequence is GDP-L-fucose synthase (320 aa).

14-20 (GGSGLVG) provides a ligand contact to NADP(+). Y142 functions as the Proton donor/acceptor in the catalytic mechanism. NADP(+) contacts are provided by residues K146, 169-172 (PTNI), and H185. Residues K193, R214, and D276 each contribute to the substrate site.

Belongs to the NAD(P)-dependent epimerase/dehydratase family. Fucose synthase subfamily.

The catalysed reaction is GDP-beta-L-fucose + NADP(+) = GDP-4-dehydro-alpha-D-rhamnose + NADPH + H(+). It participates in nucleotide-sugar biosynthesis; GDP-L-fucose biosynthesis via de novo pathway; GDP-L-fucose from GDP-alpha-D-mannose: step 2/2. Catalyzes the two-step NADP-dependent conversion of GDP-4-dehydro-6-deoxy-D-mannose to GDP-fucose, involving an epimerase and a reductase reaction. This chain is GDP-L-fucose synthase (ger), found in Dictyostelium discoideum (Social amoeba).